Consider the following 160-residue polypeptide: Cytochrome b6-f complex subunit 4 (160 aa).

Transmembrane regions (helical) follow at residues 36–56 (LLYV…GLAV), 95–115 (LLGI…PFIE), and 131–151 (TFFM…IFPI).

Belongs to the cytochrome b family. PetD subfamily. In terms of assembly, the 4 large subunits of the cytochrome b6-f complex are cytochrome b6, subunit IV (17 kDa polypeptide, PetD), cytochrome f and the Rieske protein, while the 4 small subunits are PetG, PetL, PetM and PetN. The complex functions as a dimer.

It is found in the cellular thylakoid membrane. Component of the cytochrome b6-f complex, which mediates electron transfer between photosystem II (PSII) and photosystem I (PSI), cyclic electron flow around PSI, and state transitions. The protein is Cytochrome b6-f complex subunit 4 of Gloeothece citriformis (strain PCC 7424) (Cyanothece sp. (strain PCC 7424)).